The sequence spans 632 residues: Palmitoyltransferase ZDHHC17 (632 aa).

The Cytoplasmic segment spans residues 1-304; sequence MQREEGFNTK…LKADKEFRQK (304 aa). The necessary and sufficient for interaction with DNAJC5 and SNAP25 stretch occupies residues 11 to 305; it reads MADGPDEYDT…KADKEFRQKV (295 aa). 7 ANK repeats span residues 51-86, 89-118, 123-152, 156-185, 189-219, 224-253, and 257-286; these read THID…VRQP, ENVT…IVDQ, LNST…DPSL, EGCS…DVDM, NGMT…SVNL, HKNT…NVDA, and KGES…AKGY. Helical transmembrane passes span 305-325 and 326-346; these read VMLG…DLNI and DSWL…QFLS. Over 347-357 the chain is Cytoplasmic; that stretch reads KSFFDHSMHSA. The helical transmembrane segment at 358–378 threads the bilayer; it reads LPLGIYLATKFWMYVTWFFWF. Residues 379-381 are Lumenal-facing; the sequence is WND. Residues 382–402 traverse the membrane as a helical segment; that stretch reads LNFLFIHLPFLANSVALFYNF. The Cytoplasmic segment spans residues 403-480; that stretch reads GKSWKSDPGI…GNCVGAGNHR (78 aa). The 51-residue stretch at 437–487 folds into the DHHC domain; it reads IFCSTCLIRKPVRSKHCGVCNRCIAKFDHHCPWVGNCVGAGNHRYFMGYLF. Catalysis depends on cysteine 467, which acts as the S-palmitoyl cysteine intermediate. Residues 481–501 form a helical membrane-spanning segment; sequence YFMGYLFFLLFMICWMIYGCI. Residues 502-529 lie on the Lumenal side of the membrane; it reads SYWGLHCETTYTKDGFWTYITQIATCSP. Residues 530–550 form a helical membrane-spanning segment; sequence WMFWMFLNSVFHFMWVAVLLM. Residues 551–632 are Cytoplasmic-facing; sequence CQMYQISCLG…QISGSGYQLV (82 aa).

Belongs to the DHHC palmitoyltransferase family. AKR/ZDHHC17 subfamily. As to quaternary structure, interacts (via ANK repeats) with numerous proteins (via the consensus sequence motif [VIAP]-[VIT]-x-x-Q-P). Interacts (via ANK repeats) with CLIP3. Interacts (via ANK repeats) with HTT; this interaction is inversely correlated to the length of the polyglutamine tract added to the huntingtin protein in Huntington disease. Interacts (via ANK repeats) with DNAJC5 (via C-terminus). Interacts (via ANK repeats) with MAP6. Interacts (via ANK repeats) with SNAP23. Interacts (via ANK repeats) with SNAP25. Interacts (via ANK repeats) with EVL. Interacts with SPRED1 and SPRED3. Interacts with GPM6A and OPTN. May interact (via ANK repeats) with SPRED2. May interact with NTRK1; may regulate its localization and function. Post-translationally, autopalmitoylated. Autopalmitoylation has a regulatory role in ZDHHC17-mediated Mg(2+) transport. Expressed in all brain regions. Expression is highest in the cortex, cerebellum, occipital lobe and caudate and lowest in the spinal cord. Expression is also seen in testis, pancreas, heart and kidney.

It is found in the golgi apparatus membrane. The protein localises to the cytoplasmic vesicle membrane. Its subcellular location is the presynaptic cell membrane. It carries out the reaction L-cysteinyl-[protein] + hexadecanoyl-CoA = S-hexadecanoyl-L-cysteinyl-[protein] + CoA. The enzyme catalyses L-cysteinyl-[protein] + tetradecanoyl-CoA = S-tetradecanoyl-L-cysteinyl-[protein] + CoA. The catalysed reaction is L-cysteinyl-[protein] + octadecanoyl-CoA = S-octadecanoyl-L-cysteinyl-[protein] + CoA. In terms of biological role, palmitoyltransferase that catalyzes the addition of palmitate onto various protein substrates and is involved in a variety of cellular processes. Has no stringent fatty acid selectivity and in addition to palmitate can also transfer onto target proteins myristate from tetradecanoyl-CoA and stearate from octadecanoyl-CoA. Palmitoyltransferase specific for a subset of neuronal proteins, including SNAP25, DLG4/PSD95, GAD2, SYT1 and HTT. Also palmitoylates neuronal protein GPM6A as well as SPRED1 and SPRED3. Could also play a role in axonogenesis through the regulation of NTRK1 and the downstream ERK1/ERK2 signaling cascade. May be involved in the sorting or targeting of critical proteins involved in the initiating events of endocytosis at the plasma membrane. May play a role in Mg(2+) transport. Could also palmitoylate DNAJC5 and regulate its localization to the Golgi membrane. Palmitoylates CASP6, thereby preventing its dimerization and subsequent activation. In Homo sapiens (Human), this protein is Palmitoyltransferase ZDHHC17.